Reading from the N-terminus, the 684-residue chain is RNA helicase NPH-II (684 aa).

The Helicase ATP-binding domain occupies 184-359 (FRAWAARRPT…EFFPDAEFVH (176 aa)). 197 to 204 (GGTGVGKT) provides a ligand contact to ATP. Positions 308–311 (DEVH) match the DEXH box motif. The 172-residue stretch at 392–563 (NVSAALSAHR…DLYVQPSDLE (172 aa)) folds into the Helicase C-terminal domain.

The protein belongs to the DEAD box helicase family. DEAH subfamily. As to quaternary structure, monomer.

The protein localises to the virion. It catalyses the reaction ATP + H2O = ADP + phosphate + H(+). Functionally, NTP-dependent helicase that catalyzes unidirectional unwinding of 3'tailed duplex RNAs and plays an important role during transcription of early mRNAs, presumably by preventing R-loop formation behind the elongating RNA polymerase. Might also play a role in the export of newly synthesized mRNA chains out of the core into the cytoplasm. Required for replication and propagation of viral particles. In Homo sapiens (Human), this protein is RNA helicase NPH-II (NPH2).